The primary structure comprises 491 residues: Cytochrome P450 monooxygenase 521A1 (491 aa).

The chain crosses the membrane as a helical span at residues 1–21 (MILLTLLYLIIFYIIIDFIKK). Residue cysteine 438 participates in heme binding.

Belongs to the cytochrome P450 family. Requires heme as cofactor.

The protein resides in the membrane. It carries out the reaction discoidol + reduced [NADPH--hemoprotein reductase] + O2 = discodiene + acetone + oxidized [NADPH--hemoprotein reductase] + 2 H2O + H(+). Its pathway is sesquiterpene biosynthesis. In terms of biological role, cytochrome P450 monooxygenase; part of the gene cluster that mediates the biosynthesis of the trisnorsesquiterpene discodiene which has a function during later stages of multicellular development, during the transition from fingers to Mexican hats. The terpene synthase tps8 converts its substrate farnesyl diphosphate (FDP) into the bicyclic sesquiterpene alcohol discoidol. The cytochrome P450 monooxygenase cyp521A1 then catalyzes the oxidative degradation of discoidol to form the trisnorsesquiterpene discodiene. The chain is Cytochrome P450 monooxygenase 521A1 (cyp521A1) from Dictyostelium discoideum (Social amoeba).